The primary structure comprises 819 residues: DNA topoisomerase 4 subunit A (819 aa).

A Topo IIA-type catalytic domain is found at 30-496; it reads LPDIRDGLKP…QIIEIDTASL (467 aa). Y118 functions as the O-(5'-phospho-DNA)-tyrosine intermediate in the catalytic mechanism.

It belongs to the type II topoisomerase GyrA/ParC subunit family. ParC type 2 subfamily. Heterotetramer composed of ParC and ParE.

Its subcellular location is the cell membrane. The catalysed reaction is ATP-dependent breakage, passage and rejoining of double-stranded DNA.. In terms of biological role, topoisomerase IV is essential for chromosome segregation. It relaxes supercoiled DNA. Performs the decatenation events required during the replication of a circular DNA molecule. The sequence is that of DNA topoisomerase 4 subunit A from Streptococcus pyogenes serotype M1.